The sequence spans 406 residues: tRNA-specific 2-thiouridylase MnmA (406 aa).

Residues 42-49 (GLSGGVDS) and Leu-68 each bind ATP. Cys-129 serves as the catalytic Nucleophile. A disulfide bridge connects residues Cys-129 and Cys-239. Gly-154 serves as a coordination point for ATP. An interaction with tRNA region spans residues 189–191 (KDQ). The Cysteine persulfide intermediate role is filled by Cys-239. Positions 344 to 345 (RY) are interaction with tRNA.

Belongs to the MnmA/TRMU family.

It localises to the cytoplasm. It catalyses the reaction S-sulfanyl-L-cysteinyl-[protein] + uridine(34) in tRNA + AH2 + ATP = 2-thiouridine(34) in tRNA + L-cysteinyl-[protein] + A + AMP + diphosphate + H(+). In terms of biological role, catalyzes the 2-thiolation of uridine at the wobble position (U34) of tRNA, leading to the formation of s(2)U34. The sequence is that of tRNA-specific 2-thiouridylase MnmA from Prochlorococcus marinus (strain SARG / CCMP1375 / SS120).